The sequence spans 450 residues: Bifunctional apoptosis regulator (450 aa).

Residues 1-20 (MEEPQKNDLSMREQEEEHPV) are compositionally biased toward basic and acidic residues. A disordered region spans residues 1–25 (MEEPQKNDLSMREQEEEHPVRSSGP). At 1 to 140 (MEEPQKNDLS…PSTGRVNPQR (140 aa)) the chain is on the cytoplasmic side. The RING-type zinc finger occupies 34–74 (CHCCYDTLVNPTTLNCGHSFCRHCLALWWMSSKKTECPECR). A helical transmembrane segment spans residues 141-161 (GGGFFSGVLTALTGVAVILLV). Topologically, residues 162–331 (YHWRSRESEH…REPTWKQWRE (170 aa)) are extracellular. One can recognise an SAM domain in the interval 182 to 249 (WTMEEVVLWL…LTELERVRAL (68 aa)). N-linked (GlcNAc...) asparagine glycosylation is found at Asn232 and Asn308. Residues 332–352 (FLVKYSFLPYQLIAEFAWDWL) traverse the membrane as a helical segment. Residues 353-360 (EVHYWTSR) are Cytoplasmic-facing. The chain crosses the membrane as a helical span at residues 361–381 (FLIVNAVLLSVLELFSFWRIW). Residues 382-404 (SRSELKTVPQRMWSHFWKVSTQG) lie on the Extracellular side of the membrane. Residues 405–425 (LFMAMFWPLIPQFVCNCLFYW) form a helical membrane-spanning segment. The Cytoplasmic portion of the chain corresponds to 426–450 (ALYFNPIINIDLVVKEVRRLETQVL).

As to quaternary structure, interacts with CASP8, BCL2 and BCL2L1 through SAM domain and also with HIP1, IFT57, ESRRBL1 and BCAP31. Interacts with NGFR; this interaction inhibits NF-kappa-B and JNK-related signaling pathways. Mediates RING-dependent self-ubiquitination leading to proteasomal degradation.

The protein localises to the endoplasmic reticulum membrane. It carries out the reaction S-ubiquitinyl-[E2 ubiquitin-conjugating enzyme]-L-cysteine + [acceptor protein]-L-lysine = [E2 ubiquitin-conjugating enzyme]-L-cysteine + N(6)-ubiquitinyl-[acceptor protein]-L-lysine.. Membrane-bound E3 ubiquitin ligase that plays a role in several processes including apoptosis regulation or reticulum endoplasmic stress. Has anti-apoptotic activity, both for apoptosis triggered via death-receptors and via mitochondrial factors. Contributes to the dynamic control of IRE1/ERN1 signaling during ER stress by inducing BAX inhibitor 1/TMBIM6 proteasomal degradation. Promotes the activation of TGF-beta signaling by mediating the 'Lys-63'-linked ubiquitination of TGFBR1 which is critical to activate the pathway. Together with NGFR, negatively regulates NF-kappa-B and JNK-related signaling pathways. Promotes the proteasome-mediated degradation of PNPLA3, a protein involveld in lipid metabolism. In Mus musculus (Mouse), this protein is Bifunctional apoptosis regulator (Bfar).